Reading from the N-terminus, the 308-residue chain is Phosphoribosylaminoimidazole-succinocarboxamide synthase (308 aa).

It belongs to the SAICAR synthetase family.

The enzyme catalyses 5-amino-1-(5-phospho-D-ribosyl)imidazole-4-carboxylate + L-aspartate + ATP = (2S)-2-[5-amino-1-(5-phospho-beta-D-ribosyl)imidazole-4-carboxamido]succinate + ADP + phosphate + 2 H(+). It functions in the pathway purine metabolism; IMP biosynthesis via de novo pathway; 5-amino-1-(5-phospho-D-ribosyl)imidazole-4-carboxamide from 5-amino-1-(5-phospho-D-ribosyl)imidazole-4-carboxylate: step 1/2. The protein is Phosphoribosylaminoimidazole-succinocarboxamide synthase of Xylella fastidiosa (strain Temecula1 / ATCC 700964).